We begin with the raw amino-acid sequence, 102 residues long: Putative pterin-4-alpha-carbinolamine dehydratase (102 aa).

This sequence belongs to the pterin-4-alpha-carbinolamine dehydratase family.

The catalysed reaction is (4aS,6R)-4a-hydroxy-L-erythro-5,6,7,8-tetrahydrobiopterin = (6R)-L-erythro-6,7-dihydrobiopterin + H2O. The chain is Putative pterin-4-alpha-carbinolamine dehydratase from Burkholderia multivorans (strain ATCC 17616 / 249).